A 263-amino-acid polypeptide reads, in one-letter code: Probable elongation factor 1-beta/1-delta 2 (263 aa).

N-acetylserine is present on Ser2. Positions 112-153 are disordered; the sequence is QGQTSSVAAPAAAPAAAKEEAAGDDDFDLFGSEDEEEDEEKK. Acidic residues predominate over residues 133–150; that stretch reads AGDDDFDLFGSEDEEEDE.

Belongs to the EF-1-beta/EF-1-delta family. In terms of assembly, EF-1 is composed of 4 subunits: alpha, beta, delta, and gamma.

Its function is as follows. EF-1-beta and EF-1-delta stimulate the exchange of GDP bound to EF-1-alpha to GTP. The polypeptide is Probable elongation factor 1-beta/1-delta 2 (Caenorhabditis elegans).